The primary structure comprises 399 residues: Nicotinate phosphoribosyltransferase (399 aa).

Histidine 217 carries the phosphohistidine; by autocatalysis modification.

This sequence belongs to the NAPRTase family. In terms of processing, transiently phosphorylated on a His residue during the reaction cycle. Phosphorylation strongly increases the affinity for substrates and increases the rate of nicotinate D-ribonucleotide production. Dephosphorylation regenerates the low-affinity form of the enzyme, leading to product release.

It carries out the reaction nicotinate + 5-phospho-alpha-D-ribose 1-diphosphate + ATP + H2O = nicotinate beta-D-ribonucleotide + ADP + phosphate + diphosphate. It participates in cofactor biosynthesis; NAD(+) biosynthesis; nicotinate D-ribonucleotide from nicotinate: step 1/1. In terms of biological role, catalyzes the synthesis of beta-nicotinate D-ribonucleotide from nicotinate and 5-phospho-D-ribose 1-phosphate at the expense of ATP. The sequence is that of Nicotinate phosphoribosyltransferase from Burkholderia ambifaria (strain MC40-6).